We begin with the raw amino-acid sequence, 145 residues long: Putative sterol 14-demethylase-like protein (145 aa).

The helical transmembrane segment at 5-25 (YYTLLKTSVAIIIVFVVAKLI) threads the bilayer.

The protein belongs to the cytochrome P450 family. In terms of tissue distribution, expressed specifically in roots.

It localises to the membrane. The polypeptide is Putative sterol 14-demethylase-like protein (CYP51G2) (Arabidopsis thaliana (Mouse-ear cress)).